The chain runs to 462 residues: MARACSLGLLLLLLLLLRTVVTVSLPVIVVRLNKAALDYVSDIGKAPLQRALQVTISDFMDPSGEVLQSTRVQILDAHVPFFYLKFIAGFGVHLSAAANFTIKVFSVPEPMELVLPVDLLADVHVARDSIGTLVLSVPACSSIFSPAGMLDGSISTSQELLDRVQEHIKADLNNKLCLHVYGLVQDLNVHLGTLIGLSPVGPESQIRYSITSMPTITSNYISLDIGAILSLLGKPILLPMHGAHPFVLPWPLGDAGAMATVGLSQHLFDCALLMLQKAGSLNLEITGQLNSKNNPLNTSVLGQLIPEVAHLFPEPTPLVLKVQLGATPVVTLHTSNSTLQLQPLVEVFAAPSNLALQFLFSLDVMVNLDLQLSVSKAKLRGSTSLLGGFQLSVATSNVGSVDMDQVLTLISTVFQKPLLDHLNALLGMGVVLPRVHNLHYVHSEVLVREGYVVVSSGLAYQH.

The N-terminal stretch at 1 to 22 (MARACSLGLLLLLLLLLRTVVT) is a signal peptide. Thr-55 is modified (phosphothreonine). Phosphoserine is present on Ser-63. Asn-99 is a glycosylation site (N-linked (GlcNAc...) asparagine). An intrachain disulfide couples Cys-140 to Cys-177. Residues Asn-297 and Asn-336 are each glycosylated (N-linked (GlcNAc...) asparagine).

It belongs to the BPI/LBP/Plunc superfamily. BPI/LBP family.

The protein resides in the secreted. This is BPI fold-containing family B member 2 (Bpifb2) from Mus musculus (Mouse).